The following is a 467-amino-acid chain: Metal transporter cnnm-4 (467 aa).

Residues 1 to 110 are Extracellular-facing; the sequence is MELYAAGRYD…EIPEGKDKTR (110 aa). An N-linked (GlcNAc...) asparagine glycan is attached at Asn-61. The CNNM transmembrane domain occupies 107–293; it reads DKTRVYFMMP…LEDEEAADGN (187 aa). A helical transmembrane segment spans residues 111-131; sequence VYFMMPLLVLCLGLSATFSGL. Over 132 to 170 the chain is Cytoplasmic; it reads NLAIMSFSINDLKLIQESDSDKLMKQRAMDVMRLRRNSN. Residues 171–191 form a helical membrane-spanning segment; sequence FVLVTIIFGNCFCNISITLLM. The Extracellular segment spans residues 192–196; that stretch reads NYFAE. A helical membrane pass occupies residues 197 to 217; sequence FYGFGGFIFVELISTALLLIF. At 218 to 238 the chain is on the cytoplasmic side; that stretch reads TEILPSLIFTKNALAIASRLQ. Residues 239 to 259 form a helical membrane-spanning segment; sequence YFVIFTMCITSPISYPLAMLL. Residues 260–467 lie on the Extracellular side of the membrane; that stretch reads NIILGKENAD…IFDEKDARQE (208 aa). CBS domains are found at residues 317–381 and 394–461; these read MTEI…GSDT and KRRK…IFDE. Asn-364 carries an N-linked (GlcNAc...) asparagine glycan.

Belongs to the ACDP family.

It is found in the cell membrane. Functionally, probable metal transporter. Probably acts redundantly with the other metal transport proteins cnnm-1, cnnm-2, cnnm-3 and cnnm-5 to regulate Mg(2+) homeostasis. This chain is Metal transporter cnnm-4, found in Caenorhabditis elegans.